A 239-amino-acid chain; its full sequence is Phosphoadenosine 5'-phosphosulfate reductase (239 aa).

The Nucleophile; cysteine thiosulfonate intermediate role is filled by Cys235.

Belongs to the PAPS reductase family. CysH subfamily.

The protein resides in the cytoplasm. The catalysed reaction is [thioredoxin]-disulfide + sulfite + adenosine 3',5'-bisphosphate + 2 H(+) = [thioredoxin]-dithiol + 3'-phosphoadenylyl sulfate. It participates in sulfur metabolism; hydrogen sulfide biosynthesis; sulfite from sulfate: step 3/3. In terms of biological role, catalyzes the formation of sulfite from phosphoadenosine 5'-phosphosulfate (PAPS) using thioredoxin as an electron donor. The protein is Phosphoadenosine 5'-phosphosulfate reductase of Thiocapsa roseopersicina.